The sequence spans 756 residues: Protein O-mannosyl-transferase 2 (756 aa).

7 helical membrane-spanning segments follow: residues 64 to 84 (AHVP…TRFY), 110 to 130 (TFFF…AGYL), 156 to 176 (AFCA…VLEL), 179 to 199 (SSTA…CITL), 203 to 223 (ILLD…MVKF), 245 to 265 (CLSG…LVGI), and 293 to 313 (VFGL…IHFI). MIR domains lie at 344–400 (PEYL…VKRL), 410–466 (PELV…VEVC), and 471–528 (GDPV…IEDH). 4 helical membrane-spanning segments follow: residues 602–622 (PVIW…LTVA), 643–663 (LMEG…PFYI), 672–692 (HYFP…DILL), and 713–733 (SVLL…SYGM).

Belongs to the glycosyltransferase 39 family. As to expression, widely expressed. Has particularly strong expression in ovary, testis, liver, brain, muscle, heart and eye.

The protein localises to the endoplasmic reticulum membrane. It catalyses the reaction a di-trans,poly-cis-dolichyl beta-D-mannosyl phosphate + L-seryl-[protein] = 3-O-(alpha-D-mannosyl)-L-seryl-[protein] + a di-trans,poly-cis-dolichyl phosphate + H(+). The catalysed reaction is a di-trans,poly-cis-dolichyl beta-D-mannosyl phosphate + L-threonyl-[protein] = 3-O-(alpha-D-mannosyl)-L-threonyl-[protein] + a di-trans,poly-cis-dolichyl phosphate + H(+). The protein operates within protein modification; protein glycosylation. In terms of biological role, transfers mannosyl residues to the hydroxyl group of serine or threonine residues. Coexpression of both POMT1 and POMT2 is necessary for enzyme activity, expression of either POMT1 or POMT2 alone is insufficient. In Danio rerio (Zebrafish), this protein is Protein O-mannosyl-transferase 2.